We begin with the raw amino-acid sequence, 130 residues long: Large ribosomal subunit protein bL19 (130 aa).

Belongs to the bacterial ribosomal protein bL19 family.

In terms of biological role, this protein is located at the 30S-50S ribosomal subunit interface and may play a role in the structure and function of the aminoacyl-tRNA binding site. In Burkholderia orbicola (strain MC0-3), this protein is Large ribosomal subunit protein bL19.